Reading from the N-terminus, the 145-residue chain is ATP synthase epsilon chain (145 aa).

Over residues 93–104 (AEAEKARARAQE) the composition is skewed to basic and acidic residues. A disordered region spans residues 93-113 (AEAEKARARAQEALKNPDASK).

The protein belongs to the ATPase epsilon chain family. F-type ATPases have 2 components, CF(1) - the catalytic core - and CF(0) - the membrane proton channel. CF(1) has five subunits: alpha(3), beta(3), gamma(1), delta(1), epsilon(1). CF(0) has three main subunits: a, b and c.

The protein resides in the cell inner membrane. Produces ATP from ADP in the presence of a proton gradient across the membrane. This chain is ATP synthase epsilon chain, found in Francisella philomiragia subsp. philomiragia (strain ATCC 25017 / CCUG 19701 / FSC 153 / O#319-036).